Consider the following 644-residue polypeptide: Exoribonuclease 2 (644 aa).

One can recognise an RNB domain in the interval 189 to 516 (REDLTALNFV…NHRLLKAVIT (328 aa)). The S1 motif domain maps to 561 to 643 (DIRFNAEIID…ETRGIVAKPA (83 aa)).

Belongs to the RNR ribonuclease family. RNase II subfamily.

The protein resides in the cytoplasm. The enzyme catalyses Exonucleolytic cleavage in the 3'- to 5'-direction to yield nucleoside 5'-phosphates.. Functionally, involved in mRNA degradation. Hydrolyzes single-stranded polyribonucleotides processively in the 3' to 5' direction. The polypeptide is Exoribonuclease 2 (Pectobacterium atrosepticum (strain SCRI 1043 / ATCC BAA-672) (Erwinia carotovora subsp. atroseptica)).